The primary structure comprises 192 residues: Fe/S biogenesis protein NfuA (192 aa).

Positions 149 and 152 each coordinate [4Fe-4S] cluster.

The protein belongs to the NfuA family. In terms of assembly, homodimer. [4Fe-4S] cluster is required as a cofactor.

Its function is as follows. Involved in iron-sulfur cluster biogenesis. Binds a 4Fe-4S cluster, can transfer this cluster to apoproteins, and thereby intervenes in the maturation of Fe/S proteins. Could also act as a scaffold/chaperone for damaged Fe/S proteins. This is Fe/S biogenesis protein NfuA from Shewanella baltica (strain OS223).